The primary structure comprises 124 residues: Large ribosomal subunit protein uL18 (124 aa).

The protein belongs to the universal ribosomal protein uL18 family. In terms of assembly, part of the 50S ribosomal subunit; part of the 5S rRNA/L5/L18/L25 subcomplex. Contacts the 5S and 23S rRNAs.

In terms of biological role, this is one of the proteins that bind and probably mediate the attachment of the 5S RNA into the large ribosomal subunit, where it forms part of the central protuberance. The protein is Large ribosomal subunit protein uL18 of Aquifex pyrophilus.